A 468-amino-acid chain; its full sequence is Acid phosphatase PHO1 (468 aa).

The signal sequence occupies residues 1–22; sequence MFSPILSLEIILALATLQSVFA. His-84 serves as the catalytic Nucleophile. Residues Asn-163, Asn-196, Asn-256, and Asn-321 are each glycosylated (N-linked (GlcNAc...) asparagine). Residue Asp-346 is the Proton donor of the active site. N-linked (GlcNAc...) asparagine glycans are attached at residues Asn-360 and Asn-453.

The protein belongs to the histidine acid phosphatase family.

It carries out the reaction a phosphate monoester + H2O = an alcohol + phosphate. This chain is Acid phosphatase PHO1 (PHO1), found in Komagataella pastoris (Yeast).